Consider the following 187-residue polypeptide: Adenine phosphoribosyltransferase 1 (187 aa).

A Phosphoserine modification is found at S68. Residue 133 to 137 coordinates AMP; that stretch reads ATGGS.

Belongs to the purine/pyrimidine phosphoribosyltransferase family. Homodimer. Mg(2+) serves as cofactor.

It is found in the cytoplasm. Its subcellular location is the nucleus. It carries out the reaction AMP + diphosphate = 5-phospho-alpha-D-ribose 1-diphosphate + adenine. Its pathway is purine metabolism; AMP biosynthesis via salvage pathway; AMP from adenine: step 1/1. Catalyzes a salvage reaction resulting in the formation of AMP, that is energically less costly than de novo synthesis. The chain is Adenine phosphoribosyltransferase 1 from Saccharomyces cerevisiae (strain ATCC 204508 / S288c) (Baker's yeast).